The chain runs to 311 residues: Ribosomal protein L11 methyltransferase (311 aa).

4 residues coordinate S-adenosyl-L-methionine: T163, G184, D206, and N248.

This sequence belongs to the methyltransferase superfamily. PrmA family.

It localises to the cytoplasm. It catalyses the reaction L-lysyl-[protein] + 3 S-adenosyl-L-methionine = N(6),N(6),N(6)-trimethyl-L-lysyl-[protein] + 3 S-adenosyl-L-homocysteine + 3 H(+). Its function is as follows. Methylates ribosomal protein L11. In Clostridium acetobutylicum (strain ATCC 824 / DSM 792 / JCM 1419 / IAM 19013 / LMG 5710 / NBRC 13948 / NRRL B-527 / VKM B-1787 / 2291 / W), this protein is Ribosomal protein L11 methyltransferase.